Consider the following 282-residue polypeptide: NH(3)-dependent NAD(+) synthetase (282 aa).

Residue 51-58 (GISGGVDS) participates in ATP binding. Position 57 (D57) interacts with Mg(2+). R148 is a deamido-NAD(+) binding site. Residue T168 coordinates ATP. E173 contributes to the Mg(2+) binding site. Deamido-NAD(+) is bound by residues K181 and D188. 2 residues coordinate ATP: K197 and T219. 268 to 269 (HK) is a binding site for deamido-NAD(+).

It belongs to the NAD synthetase family. In terms of assembly, homodimer.

The catalysed reaction is deamido-NAD(+) + NH4(+) + ATP = AMP + diphosphate + NAD(+) + H(+). It functions in the pathway cofactor biosynthesis; NAD(+) biosynthesis; NAD(+) from deamido-NAD(+) (ammonia route): step 1/1. In terms of biological role, catalyzes the ATP-dependent amidation of deamido-NAD to form NAD. Uses ammonia as a nitrogen source. The polypeptide is NH(3)-dependent NAD(+) synthetase (Burkholderia lata (strain ATCC 17760 / DSM 23089 / LMG 22485 / NCIMB 9086 / R18194 / 383)).